The primary structure comprises 365 residues: tRNA(Met) cytidine acetate ligase (365 aa).

ATP-binding positions include Ile7–Leu20, Gly96, Asn152, and Arg175.

The protein belongs to the TmcAL family.

Its subcellular location is the cytoplasm. The catalysed reaction is cytidine(34) in elongator tRNA(Met) + acetate + ATP = N(4)-acetylcytidine(34) in elongator tRNA(Met) + AMP + diphosphate. Its function is as follows. Catalyzes the formation of N(4)-acetylcytidine (ac(4)C) at the wobble position of elongator tRNA(Met), using acetate and ATP as substrates. First activates an acetate ion to form acetyladenylate (Ac-AMP) and then transfers the acetyl group to tRNA to form ac(4)C34. This chain is tRNA(Met) cytidine acetate ligase, found in Streptococcus pneumoniae (strain ATCC 700669 / Spain 23F-1).